A 451-amino-acid polypeptide reads, in one-letter code: REST corepressor 3 (451 aa).

Residues 1–55 (MPGMMEKGPELLGKSRSANGGAKSPAGGGGSSANGGLHFSEPESGCSSDDEHGDV) form a disordered region. An ELM2 domain is found at 55–139 (VGMRVGAEYQ…KSLADLPNFT (85 aa)). Lys76 is covalently cross-linked (Glycyl lysine isopeptide (Lys-Gly) (interchain with G-Cter in SUMO2)). An SANT domain is found at 140–191 (PFPDEWTVEDKVLFEQAFSFHGKSFHRIQQMLPDKTIASLVKYYYSWKKTRS). The tract at residues 204 to 275 (ANRHNQGDSD…SQRSKCRPPK (72 aa)) is disordered. Residues Ser212 and Ser227 each carry the phosphoserine modification. Positions 218-240 (EAHPMDGNDSDYDPKKEAKREGN) are enriched in basic and acidic residues. A Glycyl lysine isopeptide (Lys-Gly) (interchain with G-Cter in SUMO2) cross-link involves residue Lys249. The segment covering 261-273 (QHRHHSQRSKCRP) has biased composition (basic residues). The stretch at 293–329 (AANTILRQLDMELISLKRQVQNAKQVNSALKQKMEGG) forms a coiled coil. A disordered region spans residues 333-451 (FKPPEAQTPQ…IQTDSQPSLH (119 aa)). The segment covering 349 to 361 (PSPPAPSSTPTPT) has biased composition (pro residues). Over residues 375–384 (RPTLPAAPAL) the composition is skewed to low complexity. Asymmetric dimethylarginine occurs at positions 401 and 413. A compositionally biased stretch (polar residues) spans 431 to 451 (VGGQQPPSLIGIQTDSQPSLH).

It belongs to the CoREST family.

Its subcellular location is the nucleus. Its function is as follows. May act as a component of a corepressor complex that represses transcription. The chain is REST corepressor 3 (Rcor3) from Mus musculus (Mouse).